The following is a 354-amino-acid chain: Phospho-N-acetylmuramoyl-pentapeptide-transferase (354 aa).

A run of 10 helical transmembrane segments spans residues 27 to 47, 73 to 93, 97 to 117, 138 to 158, 162 to 182, 193 to 213, 230 to 250, 256 to 276, 282 to 302, and 331 to 351; these read ATLLTALVIGLIIGPRFINML, TMGGLMIVTALTLSLLLWMDV, LVWACAVVTLGFGLIGFLDDY, FVVAAFAAWLAVGETNLYVPV, LYVPLGPFYYLFAIFVIVGAG, GLAIMPVIIAAGTFAIIAYLA, AGELAIFCAAMMGAGLAFLWF, AVFMGDTGSLALGGALGVIAV, IVLAIVGGLFVMEAVSVIVQV, and TVVIRFWIVSIVLALIGLATL.

Belongs to the glycosyltransferase 4 family. MraY subfamily. It depends on Mg(2+) as a cofactor.

The protein localises to the cell inner membrane. The catalysed reaction is UDP-N-acetyl-alpha-D-muramoyl-L-alanyl-gamma-D-glutamyl-meso-2,6-diaminopimeloyl-D-alanyl-D-alanine + di-trans,octa-cis-undecaprenyl phosphate = di-trans,octa-cis-undecaprenyl diphospho-N-acetyl-alpha-D-muramoyl-L-alanyl-D-glutamyl-meso-2,6-diaminopimeloyl-D-alanyl-D-alanine + UMP. Its pathway is cell wall biogenesis; peptidoglycan biosynthesis. Its function is as follows. Catalyzes the initial step of the lipid cycle reactions in the biosynthesis of the cell wall peptidoglycan: transfers peptidoglycan precursor phospho-MurNAc-pentapeptide from UDP-MurNAc-pentapeptide onto the lipid carrier undecaprenyl phosphate, yielding undecaprenyl-pyrophosphoryl-MurNAc-pentapeptide, known as lipid I. The polypeptide is Phospho-N-acetylmuramoyl-pentapeptide-transferase (Novosphingobium aromaticivorans (strain ATCC 700278 / DSM 12444 / CCUG 56034 / CIP 105152 / NBRC 16084 / F199)).